A 213-amino-acid chain; its full sequence is MGRVAGIDEAGRGPMLGPMVVAIVVCPEEKVPLLRNMGVRDSKALSPRRRLLLSRAIPSVGCSVKVRVVEPQEIDCAVRGECYENLNHLEAAVFAQLINEVLSEGELEVVYMDSPDPVPSRFEERVRALLKGQVRIVAENGADEKYTIVGAASIVAKETRDEIINALKKTYGDFGSGYPSDPRTLRFAEEWVRKHGEPPPIARKEWATWKRLR.

An RNase H type-2 domain is found at 2 to 213 (GRVAGIDEAG…KEWATWKRLR (212 aa)). 3 residues coordinate a divalent metal cation: aspartate 8, glutamate 9, and aspartate 113.

It belongs to the RNase HII family. Mn(2+) serves as cofactor. Mg(2+) is required as a cofactor.

The protein localises to the cytoplasm. The catalysed reaction is Endonucleolytic cleavage to 5'-phosphomonoester.. Functionally, endonuclease that specifically degrades the RNA of RNA-DNA hybrids. This chain is Ribonuclease HII, found in Thermofilum pendens (strain DSM 2475 / Hrk 5).